The sequence spans 313 residues: Putative adhesin P1-like protein MPN_202 (313 aa).

The span at 1 to 16 shows a compositional bias: low complexity; sequence MGSQNQGSTTTTSAGN. The interval 1–44 is disordered; it reads MGSQNQGSTTTTSAGNPDSLVTDKVDQKGQVQTSGQNLSDTNYT. Residues 29-44 are compositionally biased toward polar residues; the sequence is GQVQTSGQNLSDTNYT.

It belongs to the adhesin P1 family.

This chain is Putative adhesin P1-like protein MPN_202, found in Mycoplasma pneumoniae (strain ATCC 29342 / M129 / Subtype 1) (Mycoplasmoides pneumoniae).